The sequence spans 712 residues: Osmolarity two-component system protein SSK1 (712 aa).

Residues 73 to 114 form a disordered region; it reads ADNTSSNNTNDNSCRSKSNGAGSGANLSVNSNTKSSVSPTAG. Low complexity predominate over residues 74–85; that stretch reads DNTSSNNTNDNS. Residues 87–113 show a composition bias toward polar residues; sequence RSKSNGAGSGANLSVNSNTKSSVSPTA. Phosphoserine occurs at positions 110, 195, 327, 351, 368, and 380. The disordered stretch occupies residues 340-362; sequence KADLKGKDGNSSPQEFKLITDEE. The disordered stretch occupies residues 448-468; that stretch reads EVQRRKEDVTPASPILTSSQT. The 143-residue stretch at 505–647 folds into the Response regulatory domain; sequence NVLIVEDNVI…WLSKKITEWG (143 aa). Aspartate 554 is modified (4-aspartylphosphate). Residues 672-712 form a disordered region; sequence KSPQKPIAPSNPHSFKQATSMTPTHSPVRKNSNLSPTQIEL. The residue at position 673 (serine 673) is a Phosphoserine. A compositionally biased stretch (polar residues) spans 682–712; sequence NPHSFKQATSMTPTHSPVRKNSNLSPTQIEL. Threonine 693 carries the phosphothreonine modification. Serine 703 and serine 706 each carry phosphoserine.

The protein belongs to the SSK1 family. As to quaternary structure, interacts with SSK2, SSK22 and YPD1. The phosphorelay mechanism involves the sequential transfer of a phosphate group from 'His-576' (H1) to 'Asp-1144' (D1) of SLN1, then to 'His-64' (H2) of YPD1 and finally to Asp-554 (D2) of SSK1.

Its subcellular location is the cytoplasm. Final receptor of the SLN1-YPD1-SSK1 two-component regulatory system, which controls activity of the HOG1 pathway in response to changes in the osmolarity of the extracellular environment. Under normal osmotic conditions, maintained in a phosphorylated and inactive state by the phosphorelay intermediate protein YPD1. Under conditions of high osmolarity, the histidine kinase SLN1 is no longer active and the unphosphorylated form of SSK1 interacts with and activates SSK2 and SSK22, two MAPKKKs that further stimulate the PBS2-HOG1 MAPKK-MAPK cascade. Unphosphorylated SSK1 is subsequently degraded by the UBC7-dependent ubiquitin-proteasome system to down-regulate the HOG1 pathway after completion of the osmotic adaptation. The chain is Osmolarity two-component system protein SSK1 from Saccharomyces cerevisiae (strain ATCC 204508 / S288c) (Baker's yeast).